Reading from the N-terminus, the 171-residue chain is Peptide deformylase (171 aa).

Residues cysteine 94 and histidine 136 each contribute to the Fe cation site. Residue glutamate 137 is part of the active site. Residue histidine 140 participates in Fe cation binding.

Belongs to the polypeptide deformylase family. It depends on Fe(2+) as a cofactor.

The enzyme catalyses N-terminal N-formyl-L-methionyl-[peptide] + H2O = N-terminal L-methionyl-[peptide] + formate. Removes the formyl group from the N-terminal Met of newly synthesized proteins. Requires at least a dipeptide for an efficient rate of reaction. N-terminal L-methionine is a prerequisite for activity but the enzyme has broad specificity at other positions. The chain is Peptide deformylase from Afipia carboxidovorans (strain ATCC 49405 / DSM 1227 / KCTC 32145 / OM5) (Oligotropha carboxidovorans).